The following is a 170-amino-acid chain: Orotate phosphoribosyltransferase (170 aa).

Residues Arg-86, Lys-87, Lys-90, His-92, and 111–119 (EDVTTSGGS) each bind 5-phospho-alpha-D-ribose 1-diphosphate. 2 residues coordinate orotate: Thr-115 and Arg-143.

Belongs to the purine/pyrimidine phosphoribosyltransferase family. PyrE subfamily. Homodimer. Requires Mg(2+) as cofactor.

The catalysed reaction is orotidine 5'-phosphate + diphosphate = orotate + 5-phospho-alpha-D-ribose 1-diphosphate. It functions in the pathway pyrimidine metabolism; UMP biosynthesis via de novo pathway; UMP from orotate: step 1/2. Catalyzes the transfer of a ribosyl phosphate group from 5-phosphoribose 1-diphosphate to orotate, leading to the formation of orotidine monophosphate (OMP). The protein is Orotate phosphoribosyltransferase of Methanoculleus marisnigri (strain ATCC 35101 / DSM 1498 / JR1).